Reading from the N-terminus, the 547-residue chain is Chaperonin GroEL (547 aa).

ATP contacts are provided by residues 30 to 33 (TLGP), Lys-51, 87 to 91 (DGTTT), Gly-415, and Asp-495.

Belongs to the chaperonin (HSP60) family. As to quaternary structure, forms a cylinder of 14 subunits composed of two heptameric rings stacked back-to-back. Interacts with the co-chaperonin GroES.

Its subcellular location is the cytoplasm. It catalyses the reaction ATP + H2O + a folded polypeptide = ADP + phosphate + an unfolded polypeptide.. In terms of biological role, together with its co-chaperonin GroES, plays an essential role in assisting protein folding. The GroEL-GroES system forms a nano-cage that allows encapsulation of the non-native substrate proteins and provides a physical environment optimized to promote and accelerate protein folding. The polypeptide is Chaperonin GroEL (Bartonella quintana (strain Toulouse) (Rochalimaea quintana)).